The following is a 198-amino-acid chain: ATP synthase protein MI25 (198 aa).

Residues 29–49 form a helical membrane-spanning segment; sequence ISIYNEEMIVALCFIGFIIFS.

This sequence belongs to the ATPase protein MI25 family. As to quaternary structure, F-type ATPases have 2 components, CF(1) - the catalytic core - and CF(0) - the membrane proton channel. CF(1) has five subunits: alpha(3), beta(3), gamma(1), delta(1), epsilon(1). CF(0) has three main subunits: a, b and c.

It localises to the mitochondrion membrane. Its function is as follows. This is one of the chains of the nonenzymatic component (CF(0) subunit) of the mitochondrial ATPase complex. This chain is ATP synthase protein MI25, found in Nicotiana tabacum (Common tobacco).